The following is a 314-amino-acid chain: Prohormone-3 (314 aa).

The N-terminal stretch at 1-19 (MGRVLLSASSLLLHIQVFT) is a signal peptide. The helical transmembrane segment at 90 to 112 (YTCVALTVVALVSTMHFGVEAWG) threads the bilayer.

The protein resides in the membrane. The sequence is that of Prohormone-3 from Apis mellifera (Honeybee).